We begin with the raw amino-acid sequence, 112 residues long: Protein lin-52 homolog (112 aa).

This sequence belongs to the lin-52 family. As to quaternary structure, component of the DREAM complex.

The sequence is that of Protein lin-52 homolog (lin52) from Danio rerio (Zebrafish).